We begin with the raw amino-acid sequence, 469 residues long: Signal recognition particle 54 kDa protein (469 aa).

GTP-binding positions include 104-111, 184-188, and 242-245; these read GLYGSGKT, DTAGR, and TKLD. Disordered regions lie at residues 388 to 410 and 447 to 469; these read ELENPRVVGQSRTKRICRGSGKP and QQGGGGGGGMGGMGGGGMGPFGD. Over residues 448 to 469 the composition is skewed to gly residues; it reads QGGGGGGGMGGMGGGGMGPFGD.

Belongs to the GTP-binding SRP family. SRP54 subfamily. In terms of assembly, part of the signal recognition particle protein translocation system, which is composed of SRP and FtsY. Archaeal SRP consists of a 7S RNA molecule of 300 nucleotides and two protein subunits: SRP54 and SRP19.

It localises to the cytoplasm. It catalyses the reaction GTP + H2O = GDP + phosphate + H(+). Its function is as follows. Involved in targeting and insertion of nascent membrane proteins into the cytoplasmic membrane. Binds to the hydrophobic signal sequence of the ribosome-nascent chain (RNC) as it emerges from the ribosomes. The SRP-RNC complex is then targeted to the cytoplasmic membrane where it interacts with the SRP receptor FtsY. The chain is Signal recognition particle 54 kDa protein from Haloarcula marismortui (strain ATCC 43049 / DSM 3752 / JCM 8966 / VKM B-1809) (Halobacterium marismortui).